The following is a 461-amino-acid chain: Probable protein phosphatase 2C 40 (461 aa).

The tract at residues 34 to 63 (REASAERASASASAGAGGRERERRPSVAAG) is disordered. Residues 57–321 (RPSVAAGQAC…DDTTCIVIDI (265 aa)) enclose the PPM-type phosphatase domain. Mn(2+)-binding residues include D98, G99, D273, and D312. Over residues 439–453 (KKEAMEGKRHSRDSS) the composition is skewed to basic and acidic residues. Positions 439 to 461 (KKEAMEGKRHSRDSSSRNSGSSE) are disordered.

Belongs to the PP2C family. It depends on Mg(2+) as a cofactor. Requires Mn(2+) as cofactor. As to expression, expressed in leaves, leaf sheaths, panicles, nodes and internodes. Expressed at low levels in roots and stems.

The protein resides in the nucleus. The protein localises to the cytoplasm. The enzyme catalyses O-phospho-L-seryl-[protein] + H2O = L-seryl-[protein] + phosphate. The catalysed reaction is O-phospho-L-threonyl-[protein] + H2O = L-threonyl-[protein] + phosphate. Functionally, mediates the negative regulation of osmotic and salt stress tolerance through regulation of the jasmonate and abscisic acid signaling pathways and modulation of the raffinose family oligosaccharide metabolism pathway. In Oryza sativa subsp. japonica (Rice), this protein is Probable protein phosphatase 2C 40.